A 364-amino-acid polypeptide reads, in one-letter code: UDP-N-acetylglucosamine--N-acetylmuramyl-(pentapeptide) pyrophosphoryl-undecaprenol N-acetylglucosamine transferase (364 aa).

Residues 15-17 (TGG), Asn-123, Arg-164, Ser-191, and Gln-286 each bind UDP-N-acetyl-alpha-D-glucosamine.

It belongs to the glycosyltransferase 28 family. MurG subfamily.

Its subcellular location is the cell inner membrane. The catalysed reaction is di-trans,octa-cis-undecaprenyl diphospho-N-acetyl-alpha-D-muramoyl-L-alanyl-D-glutamyl-meso-2,6-diaminopimeloyl-D-alanyl-D-alanine + UDP-N-acetyl-alpha-D-glucosamine = di-trans,octa-cis-undecaprenyl diphospho-[N-acetyl-alpha-D-glucosaminyl-(1-&gt;4)]-N-acetyl-alpha-D-muramoyl-L-alanyl-D-glutamyl-meso-2,6-diaminopimeloyl-D-alanyl-D-alanine + UDP + H(+). It functions in the pathway cell wall biogenesis; peptidoglycan biosynthesis. Functionally, cell wall formation. Catalyzes the transfer of a GlcNAc subunit on undecaprenyl-pyrophosphoryl-MurNAc-pentapeptide (lipid intermediate I) to form undecaprenyl-pyrophosphoryl-MurNAc-(pentapeptide)GlcNAc (lipid intermediate II). This chain is UDP-N-acetylglucosamine--N-acetylmuramyl-(pentapeptide) pyrophosphoryl-undecaprenol N-acetylglucosamine transferase, found in Prochlorococcus marinus subsp. pastoris (strain CCMP1986 / NIES-2087 / MED4).